The sequence spans 692 residues: MNKKRDSELAKLRKLLEDVHIESEETAHHLRQKHQAAIQEMQDQLDQLQKAKNKSDKEKQKFQAEVFELLAQLETANKEKLTALKNVEKLEYTVHELNIKIEEINRTVIELTSHKQRLSQENTELIKEVHEVKLQLDNANHLKTQIAQQLEDTRHRLEEEERKRASLENHAHTLEVELESLKVQLDEESEARLELERQLTKANGDAASWKSKYEAELQAHADEVEELRRKMAQKISEYEEQLEALLNKCSSLEKQKSRLQSEVEVLIMDLEKATRHAQQLEKRVAQLEKINLDLKNKLEEVTMLMEQAQKELRVKIAELQKLQHEYEKLRDQRDQLARENKKLTDDLAEAKSQLNDAHRRIHEQEIEIKRLENERDELSAAYKEAETLRKQEEAKNQRLIAELAQVRHDYEKRLAQKDEEIEALRKQYQIEIEQLNMRLAEAEAKLKTEIARLKKKYQAQITELELSLDAANKANIDLQKTIKKQALQITELQAHYDEVHRQLQQAVDQLGVTQRRCQALQAELEEMRIALEQANRAKRQAEQLHEEAVVRVNELTTINVNLASAKSKLESEFSALQADYDEVHKELRISDERVQKLTIELKSTKDLLIEEQERLVKLETVKKSLEQEVRTLHVRIEEVEANALAGGKRVIAKLESRIRDVEIEVEEERRRHAETDKMLRKKDHRVKELLLQ.

Residues 1-15 are nonhelical region; the sequence is MNKKRDSELAKLRKL. Positions 16 to 692 form a coiled coil; the sequence is LEDVHIESEE…DHRVKELLLQ (677 aa). The tract at residues 26 to 57 is disordered; sequence TAHHLRQKHQAAIQEMQDQLDQLQKAKNKSDK.

The protein belongs to the paramyosin family. Homodimer.

It is found in the cytoplasm. The protein localises to the myofibril. In terms of biological role, paramyosin is a major structural component of many thick filaments isolated from invertebrate muscles. In Dermatophagoides farinae (American house dust mite), this protein is Paramyosin.